The primary structure comprises 330 residues: Biotin synthase (330 aa).

The Radical SAM core domain occupies 42–268 (YYGRKVKLNM…INPSKEIRIA (227 aa)). [4Fe-4S] cluster is bound by residues cysteine 60, cysteine 64, and cysteine 67. [2Fe-2S] cluster contacts are provided by cysteine 103, cysteine 136, cysteine 196, and arginine 266.

Belongs to the radical SAM superfamily. Biotin synthase family. As to quaternary structure, homodimer. Requires [4Fe-4S] cluster as cofactor. The cofactor is [2Fe-2S] cluster.

The enzyme catalyses (4R,5S)-dethiobiotin + (sulfur carrier)-SH + 2 reduced [2Fe-2S]-[ferredoxin] + 2 S-adenosyl-L-methionine = (sulfur carrier)-H + biotin + 2 5'-deoxyadenosine + 2 L-methionine + 2 oxidized [2Fe-2S]-[ferredoxin]. It functions in the pathway cofactor biosynthesis; biotin biosynthesis; biotin from 7,8-diaminononanoate: step 2/2. Catalyzes the conversion of dethiobiotin (DTB) to biotin by the insertion of a sulfur atom into dethiobiotin via a radical-based mechanism. The polypeptide is Biotin synthase (Macrococcus caseolyticus (strain JCSC5402) (Macrococcoides caseolyticum)).